We begin with the raw amino-acid sequence, 397 residues long: Lysophospholipid transporter LplT (397 aa).

Over 1 to 17 (MSESVHTNTSLWSKGMK) the chain is Periplasmic. A helical membrane pass occupies residues 18 to 38 (AVIVAQFLSAFGDNALLFATL). Residues 39-52 (ALLKAQFYPEWSQP) lie on the Cytoplasmic side of the membrane. The chain crosses the membrane as a helical span at residues 53–73 (ILQMVFVGAYILFAPFVGQVA). The Periplasmic segment spans residues 74–90 (DSFAKGRVMMFANGLKL). Residues 91 to 111 (LGAASICFGINPFLGYTLVGV) form a helical membrane-spanning segment. The Cytoplasmic portion of the chain corresponds to 112 to 144 (GAAAYSPAKYGILGELTTGSKLVKANGLMEAST). A helical membrane pass occupies residues 145–165 (IAAILLGSVAGGVLADWHVLV). Ala166 is a topological domain (periplasmic). A helical membrane pass occupies residues 167–187 (LAACALAYGGAVVANIYIPKL). Topologically, residues 188 to 226 (AAARPGQSWNLINMTRSFLNACTSLWRNGETRFSLVGTS) are cytoplasmic. A helical membrane pass occupies residues 227 to 247 (LFWGAGVTLRFLLVLWVPVAL). The Periplasmic segment spans residues 248–256 (GITDNATPT). A helical membrane pass occupies residues 257 to 277 (YLNAMVAIGIVVGAGAAAKLV). The Cytoplasmic portion of the chain corresponds to 278-280 (TLE). A helical transmembrane segment spans residues 281–301 (TMSRCMPAGILIGVVVLIFSL). Residues 302–304 (QHE) lie on the Periplasmic side of the membrane. A helical membrane pass occupies residues 305–325 (LLPAYALLMLIGVMGGFFVVP). The Cytoplasmic segment spans residues 326–343 (LNALLQERGKKSVGAGNA). Residues 344-364 (IAVQNLGENSAMLLMLGIYSL) form a helical membrane-spanning segment. Residues 365–366 (AV) are Periplasmic-facing. Residues 367 to 387 (MVGIPVVPIGIGFGALFALAI) form a helical membrane-spanning segment. At 388-397 (TALWIWQRRH) the chain is on the cytoplasmic side.

Belongs to the major facilitator superfamily. LplT (TC 2.A.1.42) family.

It is found in the cell inner membrane. Its function is as follows. Catalyzes the facilitated diffusion of 2-acyl-glycero-3-phosphoethanolamine (2-acyl-GPE) into the cell. This chain is Lysophospholipid transporter LplT, found in Shigella sonnei (strain Ss046).